The primary structure comprises 465 residues: MAP kinase-interacting serine/threonine-protein kinase 2 (465 aa).

The tract at residues 23 to 72 (ELAFSLDQPDHGDSDFGLQCSARPDMPASQPIDIPDAKKRGKKKKRGRAT) is disordered. The Nuclear localization signal motif lies at 60–66 (KKRGKKK). Residue Ser74 is modified to Phosphoserine. One can recognise a Protein kinase domain in the interval 84 to 388 (QLQEDVLGEG…TPMVLQRNSC (305 aa)). ATP-binding positions include 90 to 98 (LGEGAHARV) and Lys113. Residue 160 to 162 (EKM) participates in staurosporine binding. Asp205 functions as the Proton acceptor in the catalytic mechanism. Position 209 (Glu209) interacts with staurosporine. Phosphothreonine occurs at positions 244 and 249. Zn(2+) is bound by residues Cys299, Cys311, and Cys314. Thr379 is subject to Phosphothreonine. Residues Ser437 and Ser440 each carry the phosphoserine modification. Positions 444–448 (LAQRR) match the MAP kinase binding motif. Ser452 carries the phosphoserine modification.

It belongs to the protein kinase superfamily. CAMK Ser/Thr protein kinase family. In terms of assembly, monomer. Interacts with the C-terminal regions of EIF4G1 and EIF4G2; this interaction is promoted when MAPK pathways are repressed but repressed upon ERK proteins activation. Also binds to dephosphorylated MAPK3/ERK1 and MAPK1/ERK2. Isoform 1 interaction with phosphorylated MAPK3/ERK1 and MAPK1/ERK2 protects it from dephosphorylation and inactivation. Isoform 2 interacts with ESR2 and EIF4E in the nucleus. Mg(2+) is required as a cofactor. The cofactor is Zn(2+). In terms of processing, dual phosphorylation of Thr-244 and Thr-249 activates the kinase. Phosphorylation of Thr-379 activates the kinase. Phosphorylated upon arsenic trioxide As(2)O(3) treatment. Phosphorylated by MAPK1/ERK2, MAPK11 and MAPK14. Dephosphorylated by PP2A. Ubiquitously expressed in all tissues examined. Isoform 2 is expressed at higher levels in the ovary than is isoform 1.

The protein localises to the nucleus. It localises to the PML body. It is found in the cytoplasm. The enzyme catalyses L-seryl-[protein] + ATP = O-phospho-L-seryl-[protein] + ADP + H(+). It catalyses the reaction L-threonyl-[protein] + ATP = O-phospho-L-threonyl-[protein] + ADP + H(+). With respect to regulation, inhibited by CGP57380 and staurosporine. Activated by phosphorylation in a negative-feedback regulatory manner in response to chemotherapy (e.g. cytarabine) and thus impairs the generation of antileukemic responses. Serine/threonine-protein kinase that phosphorylates SFPQ/PSF, HNRNPA1 and EIF4E. May play a role in the response to environmental stress and cytokines. Appears to regulate translation by phosphorylating EIF4E, thus increasing the affinity of this protein for the 7-methylguanosine-containing mRNA cap. Required for mediating PP2A-inhibition-induced EIF4E phosphorylation. Triggers EIF4E shuttling from cytoplasm to nucleus. Isoform 1 displays a high basal kinase activity, but isoform 2 exhibits a very low kinase activity. Acts as a mediator of the suppressive effects of IFNgamma on hematopoiesis. Negative regulator for signals that control generation of arsenic trioxide As(2)O(3)-dependent apoptosis and anti-leukemic responses. Involved in anti-apoptotic signaling in response to serum withdrawal. In Homo sapiens (Human), this protein is MAP kinase-interacting serine/threonine-protein kinase 2 (MKNK2).